We begin with the raw amino-acid sequence, 2110 residues long: Protein Ycf2 (2110 aa).

A disordered region spans residues Asp190–Ser209. Gly1442–Ser1449 contacts ATP.

The protein belongs to the Ycf2 family.

The protein resides in the plastid. Its subcellular location is the chloroplast stroma. In terms of biological role, probable ATPase of unknown function. Its presence in a non-photosynthetic plant (Epifagus virginiana) and experiments in tobacco indicate that it has an essential function which is probably not related to photosynthesis. This is Protein Ycf2 from Panax ginseng (Korean ginseng).